A 316-amino-acid polypeptide reads, in one-letter code: MVSKKSVKRGLITGLIGISIYSLGMHPAQAAPSPHTPVSSDPSYKAETSVTYDPNIKSDQYGLYSKAFTGTGKVNETKEKAEKKSPAKAPYSIKSVIGSDDRTRVTNTTAYPYRAIVHISSSIGSCTGWMIGPKTVATAGHCIYDTSSGSFAGTATVSPGRNGTSYPYGSVKSTRYFIPSGWRSGNTNYDYGAIELSEPIGNTVGYFGYSYTTSSLVGTTVTISGYPGDKTAGTQWQHSGPIAISETYKLQYAMDTYGGQSGSPVFEQSSSRTNCSGPCSLAVHTNGVYGGSSYNRGTRITKEVFDNLTNWKNSAQ.

The first 30 residues, 1–30, serve as a signal peptide directing secretion; the sequence is MVSKKSVKRGLITGLIGISIYSLGMHPAQA. Residues 31-94 constitute a propeptide that is removed on maturation; that stretch reads APSPHTPVSS…SPAKAPYSIK (64 aa). A disulfide bridge links Cys126 with Cys142. Catalysis depends on charge relay system residues His141 and Ser261. Cys275 and Cys279 are disulfide-bonded.

The protein belongs to the peptidase S1B family.

The protein localises to the secreted. It catalyses the reaction Preferential cleavage: Glu-|-Xaa, Asp-|-Xaa.. Functionally, specific for hydrolysis of peptide bonds on the carboxyl side of acidic amino acid residues, with a strong preference for Glu. This Bacillus licheniformis (strain ATCC 14580 / DSM 13 / JCM 2505 / CCUG 7422 / NBRC 12200 / NCIMB 9375 / NCTC 10341 / NRRL NRS-1264 / Gibson 46) protein is Glutamyl endopeptidase (blaSE).